The following is a 104-amino-acid chain: Small ribosomal subunit protein uS10 (104 aa).

The protein belongs to the universal ribosomal protein uS10 family. Part of the 30S ribosomal subunit.

Its function is as follows. Involved in the binding of tRNA to the ribosomes. This chain is Small ribosomal subunit protein uS10, found in Aliarcobacter butzleri (strain RM4018) (Arcobacter butzleri).